Consider the following 184-residue polypeptide: NADH-quinone oxidoreductase subunit B (184 aa).

4 residues coordinate [4Fe-4S] cluster: Cys-37, Cys-38, Cys-103, and Cys-132. The segment at 164–184 (HEREEAAKHALPTHSMKGLLR) is disordered.

Belongs to the complex I 20 kDa subunit family. In terms of assembly, NDH-1 is composed of 14 different subunits. Subunits NuoB, C, D, E, F, and G constitute the peripheral sector of the complex. [4Fe-4S] cluster is required as a cofactor.

It is found in the cell membrane. The enzyme catalyses a quinone + NADH + 5 H(+)(in) = a quinol + NAD(+) + 4 H(+)(out). Functionally, NDH-1 shuttles electrons from NADH, via FMN and iron-sulfur (Fe-S) centers, to quinones in the respiratory chain. The immediate electron acceptor for the enzyme in this species is believed to be a menaquinone. Couples the redox reaction to proton translocation (for every two electrons transferred, four hydrogen ions are translocated across the cytoplasmic membrane), and thus conserves the redox energy in a proton gradient. In Acidothermus cellulolyticus (strain ATCC 43068 / DSM 8971 / 11B), this protein is NADH-quinone oxidoreductase subunit B.